The primary structure comprises 174 residues: Early E1A protein (174 aa).

Residues 40 to 48 (PSLHDLFDL) form an interaction with RB1 in competition with E2F1 region. Residues 106-110 (LLCLE) carry the LXCXE motif, interaction with host RB1 motif. A zinc finger lies at 145–163 (CLRCAYYQEQGENSICGLC).

Belongs to the adenoviridae E1A protein family. In terms of assembly, interacts with host UBE2I; this interaction interferes with polySUMOylation. Interacts with host RB1; this interaction induces the aberrant dissociation of RB1-E2F1 complex thereby disrupting the activity of RB1 and activating E2F1-regulated genes. Interacts with host ATF7; the interaction enhances ATF7-mediated viral transactivation activity which requires the zinc binding domains of both proteins. Isoform early E1A 32 kDa protein and isoform early E1A 26 kDa protein interact (via N-terminus) with CUL1 and E3 ubiquitin ligase RBX1; these interactions inhibit RBX1-CUL1-dependent elongation reaction of ubiquitin chains and attenuate ubiquitination of SCF(FBXW7) target proteins. Interacts (via PXLXP motif) with host ZMYND11/BS69 (via MYND-type zinc finger); this interaction inhibits E1A mediated transactivation. Interacts with host EP300; this interaction stimulates the acetylation of RB1 by recruiting EP300 and RB1 into a multimeric-protein complex. Interacts with host CTBP1 and CTBP2; this interaction seems to potentiate viral replication. Interacts with host DCAF7. Interacts with host DYRK1A. Interacts with host KPNA4; this interaction allows E1A import into the host nucleus. Interacts with host EP400; this interaction stabilizes MYC. Interacts with host TBP protein; this interaction probably disrupts the TBP-TATA complex.

The protein localises to the host nucleus. In terms of biological role, plays a role in viral genome replication by driving entry of quiescent cells into the cell cycle. Stimulation of progression from G1 to S phase allows the virus to efficiently use the cellular DNA replicating machinery to achieve viral genome replication. E1A protein has both transforming and trans-activating activities. Induces the disassembly of the E2F1 transcription factor from RB1 by direct competition for the same binding site on RB1, with subsequent transcriptional activation of E2F1-regulated S-phase genes and of the E2 region of the adenoviral genome. Release of E2F1 leads to the ARF-mediated inhibition of MDM2 and causes TP53/p53 to accumulate because it is not targeted for degradation by MDM2-mediated ubiquitination anymore. This increase in TP53, in turn, would arrest the cell proliferation and direct its death but this effect is counteracted by the viral protein E1B-55K. Inactivation of the ability of RB1 to arrest the cell cycle is critical for cellular transformation, uncontrolled cellular growth and proliferation induced by viral infection. Interaction with RBX1 and CUL1 inhibits ubiquitination of the proteins targeted by SCF(FBXW7) ubiquitin ligase complex, and may be linked to unregulated host cell proliferation. The tumorigenesis-restraining activity of E1A may be related to the disruption of the host CtBP-CtIP complex through the CtBP binding motif. This Canine adenovirus serotype 1 (strain RI261) (CAdV-1) protein is Early E1A protein.